The chain runs to 310 residues: Homoserine O-acetyltransferase (310 aa).

The active-site Acyl-thioester intermediate is Cys142. Residues Lys163 and Ser192 each coordinate substrate. His235 functions as the Proton acceptor in the catalytic mechanism. Glu237 is a catalytic residue. Substrate is bound at residue Arg249.

The protein belongs to the MetA family.

Its subcellular location is the cytoplasm. It catalyses the reaction L-homoserine + acetyl-CoA = O-acetyl-L-homoserine + CoA. Its pathway is amino-acid biosynthesis; L-methionine biosynthesis via de novo pathway; O-acetyl-L-homoserine from L-homoserine: step 1/1. Functionally, transfers an acetyl group from acetyl-CoA to L-homoserine, forming acetyl-L-homoserine. This Lachnospira eligens (strain ATCC 27750 / DSM 3376 / VPI C15-48 / C15-B4) (Eubacterium eligens) protein is Homoserine O-acetyltransferase.